Consider the following 198-residue polypeptide: Suppressor of cytokine signaling 2 (198 aa).

The disordered stretch occupies residues 1 to 29 (MTLRCLEPSGNGGEGTRSQWGTAGSAEEP). An interaction with AREL1 region spans residues 1–75 (MTLRCLEPSG…PEGTFLIRDS (75 aa)). At Ser30 the chain carries Phosphoserine. The SH2 domain occupies 48–156 (WYWGSMTVNE…TVHLYLTKPL (109 aa)). Ser52 is modified (phosphoserine; by PKC). Residues 151–197 (YLTKPLYTSAPSLQHLCRLTINKCTGAIWGLPLPTRLKDYLEEYKFQ) form the SOCS box domain. Lys173 participates in a covalent cross-link: Glycyl lysine isopeptide (Lys-Gly) (interchain with G-Cter in ubiquitin).

Substrate-recognition component of the ECS(SOCS2) complex, composed of SOCS2, CUL5, ELOB, ELOC and RNF7/RBX2. Interacts with IGF1R. Interacts with DCUN1D1. Ubiquitinated; mediated by AREL1 and leading to its subsequent proteasomal degradation. Ubiquitination is dependent on its phosphorylation at Ser-52, by PKC. Ubiquitination is stimulated by LPS. Post-translationally, phosphorylation at Ser-52 by PKC facilitates its ubiquitination and proteasomal degradation. High expression in heart, placenta, lung, kidney and prostate. Predominantly expressed in pulmonary epithelia cells, specifically type II pneumocytes.

It localises to the cytoplasm. Its pathway is protein modification; protein ubiquitination. Substrate-binding is prevented by the covalent inhibitor MN551 that cross-links with Cys-111. Also inhibited by a MN551 derivative, MN714, which contains a pivaloyloxymethyl that allows cell permeability. Functionally, substrate-recognition component of a cullin-5-RING E3 ubiquitin-protein ligase complex (ECS complex, also named CRL5 complex), which mediates the ubiquitination and subsequent proteasomal degradation of target proteins, such as EPOR and GHR. Specifically recognizes and binds phosphorylated proteins via its SH2 domain, promoting their ubiquitination. The ECS(SOCS2) complex acts as a key regulator of growth hormone receptor (GHR) levels by mediating ubiquitination and degradation of GHR, following GHR phosphorylation by JAK2. The ECS(SOCS2) also catalyzes ubiquitination and degradation of JAK2-phosphorylated EPOR. This is Suppressor of cytokine signaling 2 from Homo sapiens (Human).